A 328-amino-acid chain; its full sequence is N-acetyl-gamma-glutamyl-phosphate reductase (328 aa).

Residue C143 is part of the active site.

This sequence belongs to the NAGSA dehydrogenase family. Type 1 subfamily.

The protein resides in the cytoplasm. The catalysed reaction is N-acetyl-L-glutamate 5-semialdehyde + phosphate + NADP(+) = N-acetyl-L-glutamyl 5-phosphate + NADPH + H(+). It functions in the pathway amino-acid biosynthesis; L-arginine biosynthesis; N(2)-acetyl-L-ornithine from L-glutamate: step 3/4. Functionally, catalyzes the NADPH-dependent reduction of N-acetyl-5-glutamyl phosphate to yield N-acetyl-L-glutamate 5-semialdehyde. This chain is N-acetyl-gamma-glutamyl-phosphate reductase, found in Methanosphaerula palustris (strain ATCC BAA-1556 / DSM 19958 / E1-9c).